A 279-amino-acid chain; its full sequence is Acetyl-coenzyme A carboxylase carboxyl transferase subunit beta (279 aa).

Residues 23 to 279 (MWWKCDECGA…IVRLMTMLAP (257 aa)) enclose the CoA carboxyltransferase N-terminal domain. Zn(2+) contacts are provided by Cys-27, Cys-30, Cys-46, and Cys-49. The C4-type zinc finger occupies 27 to 49 (CDECGAMLHKKQLEDNFYTCSEC).

The protein belongs to the AccD/PCCB family. Acetyl-CoA carboxylase is a heterohexamer composed of biotin carboxyl carrier protein (AccB), biotin carboxylase (AccC) and two subunits each of ACCase subunit alpha (AccA) and ACCase subunit beta (AccD). It depends on Zn(2+) as a cofactor.

It localises to the cytoplasm. The enzyme catalyses N(6)-carboxybiotinyl-L-lysyl-[protein] + acetyl-CoA = N(6)-biotinyl-L-lysyl-[protein] + malonyl-CoA. It functions in the pathway lipid metabolism; malonyl-CoA biosynthesis; malonyl-CoA from acetyl-CoA: step 1/1. Functionally, component of the acetyl coenzyme A carboxylase (ACC) complex. Biotin carboxylase (BC) catalyzes the carboxylation of biotin on its carrier protein (BCCP) and then the CO(2) group is transferred by the transcarboxylase to acetyl-CoA to form malonyl-CoA. The sequence is that of Acetyl-coenzyme A carboxylase carboxyl transferase subunit beta from Chlorobium phaeobacteroides (strain DSM 266 / SMG 266 / 2430).